The chain runs to 345 residues: Dimethyladenosine transferase 1, mitochondrial (345 aa).

The transit peptide at M1–L27 directs the protein to the mitochondrion. S-adenosyl-L-methionine-binding positions include Q35–L38, N36, L38, G63, E85, D111, and N141.

It belongs to the class I-like SAM-binding methyltransferase superfamily. rRNA adenine N(6)-methyltransferase family. KsgA subfamily. In terms of assembly, interacts with mitochondrial RNA polymerase POLRMT. Interacts with TFAM.

It localises to the mitochondrion. Its function is as follows. S-adenosyl-L-methionine-dependent methyltransferase which specifically dimethylates mitochondrial 12S rRNA at the conserved stem loop. Also required for basal transcription of mitochondrial DNA, probably via its interaction with POLRMT and TFAM. Stimulates transcription independently of the methyltransferase activity. This Rattus norvegicus (Rat) protein is Dimethyladenosine transferase 1, mitochondrial (Tfb1m).